The chain runs to 216 residues: Peptide deformylase (216 aa).

Fe cation-binding residues include cysteine 134 and histidine 178. Glutamate 179 is a catalytic residue. Residue histidine 182 participates in Fe cation binding.

This sequence belongs to the polypeptide deformylase family. Fe(2+) serves as cofactor.

It catalyses the reaction N-terminal N-formyl-L-methionyl-[peptide] + H2O = N-terminal L-methionyl-[peptide] + formate. Removes the formyl group from the N-terminal Met of newly synthesized proteins. Requires at least a dipeptide for an efficient rate of reaction. N-terminal L-methionine is a prerequisite for activity but the enzyme has broad specificity at other positions. The protein is Peptide deformylase of Mycoplasma pneumoniae (strain ATCC 29342 / M129 / Subtype 1) (Mycoplasmoides pneumoniae).